A 398-amino-acid polypeptide reads, in one-letter code: Histidinol-phosphate aminotransferase (398 aa).

The segment covering 1-10 has biased composition (polar residues); that stretch reads MTGQRATPQP. Positions 1–30 are disordered; that stretch reads MTGQRATPQPTLDDLPLRDDLRGKSPYGAP. Lys234 bears the N6-(pyridoxal phosphate)lysine mark.

The protein belongs to the class-II pyridoxal-phosphate-dependent aminotransferase family. Histidinol-phosphate aminotransferase subfamily. In terms of assembly, homodimer. Pyridoxal 5'-phosphate is required as a cofactor.

The catalysed reaction is L-histidinol phosphate + 2-oxoglutarate = 3-(imidazol-4-yl)-2-oxopropyl phosphate + L-glutamate. Its pathway is amino-acid biosynthesis; L-histidine biosynthesis; L-histidine from 5-phospho-alpha-D-ribose 1-diphosphate: step 7/9. This chain is Histidinol-phosphate aminotransferase, found in Mycolicibacterium paratuberculosis (strain ATCC BAA-968 / K-10) (Mycobacterium paratuberculosis).